The sequence spans 160 residues: 2-C-methyl-D-erythritol 2,4-cyclodiphosphate synthase (160 aa).

A divalent metal cation is bound by residues Asp11 and His13. 4-CDP-2-C-methyl-D-erythritol 2-phosphate contacts are provided by residues 11–13 and 37–38; these read DVH and HS. An a divalent metal cation-binding site is contributed by His45. 4-CDP-2-C-methyl-D-erythritol 2-phosphate is bound by residues 59 to 61 and Arg145; that span reads DIG.

The protein belongs to the IspF family. As to quaternary structure, homotrimer. It depends on a divalent metal cation as a cofactor.

It catalyses the reaction 4-CDP-2-C-methyl-D-erythritol 2-phosphate = 2-C-methyl-D-erythritol 2,4-cyclic diphosphate + CMP. The protein operates within isoprenoid biosynthesis; isopentenyl diphosphate biosynthesis via DXP pathway; isopentenyl diphosphate from 1-deoxy-D-xylulose 5-phosphate: step 4/6. Functionally, involved in the biosynthesis of isopentenyl diphosphate (IPP) and dimethylallyl diphosphate (DMAPP), two major building blocks of isoprenoid compounds. Catalyzes the conversion of 4-diphosphocytidyl-2-C-methyl-D-erythritol 2-phosphate (CDP-ME2P) to 2-C-methyl-D-erythritol 2,4-cyclodiphosphate (ME-CPP) with a corresponding release of cytidine 5-monophosphate (CMP). This is 2-C-methyl-D-erythritol 2,4-cyclodiphosphate synthase from Neisseria meningitidis serogroup B (strain ATCC BAA-335 / MC58).